We begin with the raw amino-acid sequence, 227 residues long: Germin-like protein 3-3 (227 aa).

Positions 1-26 (MECFKTTLAGVVLVVLLLQQAPVLRA) are cleaved as a signal peptide. A disulfide bridge links cysteine 36 with cysteine 51. Residues 65 to 217 (SRLATGGDVN…ALRVDAGVVE (153 aa)) enclose the Cupin type-1 domain. Asparagine 78 and asparagine 81 each carry an N-linked (GlcNAc...) asparagine glycan. Mn(2+) is bound by residues histidine 114, histidine 116, glutamate 121, and histidine 163.

Belongs to the germin family. As to quaternary structure, oligomer (believed to be a pentamer but probably hexamer).

Its subcellular location is the secreted. The protein resides in the extracellular space. The protein localises to the apoplast. In terms of biological role, may play a role in plant defense. Probably has no oxalate oxidase activity even if the active site is conserved. This is Germin-like protein 3-3 from Oryza sativa subsp. japonica (Rice).